Here is a 61-residue protein sequence, read N- to C-terminus: Odorranain-A6 (61 aa).

Positions 1-22 (MFSMKKSLLLLFFLGTISLSLC) are cleaved as a signal peptide. Residues 23–45 (EQERDAEEEEGSENGAEDIKINR) constitute a propeptide that is removed on maturation.

It belongs to the frog skin active peptide (FSAP) family. Brevinin subfamily. As to expression, expressed by the skin glands.

It is found in the secreted. The protein is Odorranain-A6 of Odorrana hainanensis (Odor frog).